Consider the following 251-residue polypeptide: 2,3-bisphosphoglycerate-dependent phosphoglycerate mutase (251 aa).

Residues 8–15 (RHGESLWN), 21–22 (TG), R60, 87–90 (ERHY), K98, 114–115 (RR), and 183–184 (GN) each bind substrate. The Tele-phosphohistidine intermediate role is filled by H9. The Proton donor/acceptor role is filled by E87.

The protein belongs to the phosphoglycerate mutase family. BPG-dependent PGAM subfamily.

The catalysed reaction is (2R)-2-phosphoglycerate = (2R)-3-phosphoglycerate. It participates in carbohydrate degradation; glycolysis; pyruvate from D-glyceraldehyde 3-phosphate: step 3/5. Its function is as follows. Catalyzes the interconversion of 2-phosphoglycerate and 3-phosphoglycerate. The protein is 2,3-bisphosphoglycerate-dependent phosphoglycerate mutase of Thermoanaerobacter sp. (strain X514).